A 457-amino-acid polypeptide reads, in one-letter code: Glutamate--tRNA ligase 2 (457 aa).

A 'HIGH' region motif is present at residues 9 to 19 (PSPTGYIHIGN). Residues 250 to 254 (GLSKR) carry the 'KMSKS' region motif. An ATP-binding site is contributed by lysine 253.

This sequence belongs to the class-I aminoacyl-tRNA synthetase family. Glutamate--tRNA ligase type 1 subfamily. In terms of assembly, monomer.

It localises to the cytoplasm. The enzyme catalyses tRNA(Glu) + L-glutamate + ATP = L-glutamyl-tRNA(Glu) + AMP + diphosphate. Functionally, catalyzes the attachment of glutamate to tRNA(Glu) in a two-step reaction: glutamate is first activated by ATP to form Glu-AMP and then transferred to the acceptor end of tRNA(Glu). The polypeptide is Glutamate--tRNA ligase 2 (Brucella melitensis biotype 1 (strain ATCC 23456 / CCUG 17765 / NCTC 10094 / 16M)).